A 159-amino-acid chain; its full sequence is Cyclic pyranopterin monophosphate synthase (159 aa).

Substrate-binding positions include 74–76 and 112–113; these read MCH and ME. Asp127 is a catalytic residue.

Belongs to the MoaC family. In terms of assembly, homohexamer; trimer of dimers.

The catalysed reaction is (8S)-3',8-cyclo-7,8-dihydroguanosine 5'-triphosphate = cyclic pyranopterin phosphate + diphosphate. Its pathway is cofactor biosynthesis; molybdopterin biosynthesis. Catalyzes the conversion of (8S)-3',8-cyclo-7,8-dihydroguanosine 5'-triphosphate to cyclic pyranopterin monophosphate (cPMP). This Helicobacter hepaticus (strain ATCC 51449 / 3B1) protein is Cyclic pyranopterin monophosphate synthase.